Reading from the N-terminus, the 600-residue chain is Proline--tRNA ligase (600 aa).

It belongs to the class-II aminoacyl-tRNA synthetase family. ProS type 1 subfamily. As to quaternary structure, homodimer.

It localises to the cytoplasm. It carries out the reaction tRNA(Pro) + L-proline + ATP = L-prolyl-tRNA(Pro) + AMP + diphosphate. In terms of biological role, catalyzes the attachment of proline to tRNA(Pro) in a two-step reaction: proline is first activated by ATP to form Pro-AMP and then transferred to the acceptor end of tRNA(Pro). As ProRS can inadvertently accommodate and process non-cognate amino acids such as alanine and cysteine, to avoid such errors it has two additional distinct editing activities against alanine. One activity is designated as 'pretransfer' editing and involves the tRNA(Pro)-independent hydrolysis of activated Ala-AMP. The other activity is designated 'posttransfer' editing and involves deacylation of mischarged Ala-tRNA(Pro). The misacylated Cys-tRNA(Pro) is not edited by ProRS. The protein is Proline--tRNA ligase of Prochlorococcus marinus (strain MIT 9211).